The sequence spans 343 residues: Shematrin-like protein 3 (343 aa).

The signal sequence occupies residues 1 to 16 (MLKLVCAVVLIATVNA).

In terms of tissue distribution, prismatic layer of shell (at protein level).

Its subcellular location is the secreted. This is Shematrin-like protein 3 from Pinctada maxima (Silver-lipped pearl oyster).